A 127-amino-acid polypeptide reads, in one-letter code: Glycine cleavage system H protein 1 (127 aa).

The region spanning 20-101 is the Lipoyl-binding domain; it reads LLTVGITAYA…LGEAWFFRFR (82 aa). K60 is subject to N6-lipoyllysine.

The protein belongs to the GcvH family. The glycine cleavage system is composed of four proteins: P, T, L and H. Requires (R)-lipoate as cofactor.

Functionally, the glycine cleavage system catalyzes the degradation of glycine. The H protein shuttles the methylamine group of glycine from the P protein to the T protein. This Pseudomonas aeruginosa (strain ATCC 15692 / DSM 22644 / CIP 104116 / JCM 14847 / LMG 12228 / 1C / PRS 101 / PAO1) protein is Glycine cleavage system H protein 1.